Here is a 410-residue protein sequence, read N- to C-terminus: Serine hydroxymethyltransferase (410 aa).

(6S)-5,6,7,8-tetrahydrofolate contacts are provided by residues Leu116 and 120–122; that span reads GHL. An N6-(pyridoxal phosphate)lysine modification is found at Lys225. Residue 349-351 coordinates (6S)-5,6,7,8-tetrahydrofolate; it reads SPF.

It belongs to the SHMT family. In terms of assembly, homodimer. Pyridoxal 5'-phosphate serves as cofactor.

Its subcellular location is the cytoplasm. The catalysed reaction is (6R)-5,10-methylene-5,6,7,8-tetrahydrofolate + glycine + H2O = (6S)-5,6,7,8-tetrahydrofolate + L-serine. The protein operates within one-carbon metabolism; tetrahydrofolate interconversion. It functions in the pathway amino-acid biosynthesis; glycine biosynthesis; glycine from L-serine: step 1/1. Functionally, catalyzes the reversible interconversion of serine and glycine with tetrahydrofolate (THF) serving as the one-carbon carrier. This reaction serves as the major source of one-carbon groups required for the biosynthesis of purines, thymidylate, methionine, and other important biomolecules. Also exhibits THF-independent aldolase activity toward beta-hydroxyamino acids, producing glycine and aldehydes, via a retro-aldol mechanism. The chain is Serine hydroxymethyltransferase from Leuconostoc mesenteroides subsp. mesenteroides (strain ATCC 8293 / DSM 20343 / BCRC 11652 / CCM 1803 / JCM 6124 / NCDO 523 / NBRC 100496 / NCIMB 8023 / NCTC 12954 / NRRL B-1118 / 37Y).